A 322-amino-acid chain; its full sequence is Undecaprenyl-phosphate 4-deoxy-4-formamido-L-arabinose transferase (322 aa).

Residues 1 to 235 are Cytoplasmic-facing; it reads MFEIHPVKKV…TCLTTTPLRM (235 aa). The helical transmembrane segment at 236–256 threads the bilayer; it reads LSLLGSIIAIGGFSIAVLLVI. Residues 257 to 269 are Periplasmic-facing; the sequence is LRLTFGPQWAAEG. A helical membrane pass occupies residues 270–290; it reads VFMLFAVLFTFIGAQFIGMGL. The Cytoplasmic portion of the chain corresponds to 291-322; that stretch reads LGEYIGRIYTDVRARPRYFVQQVIRPSSKENE.

The protein belongs to the glycosyltransferase 2 family.

Its subcellular location is the cell inner membrane. It catalyses the reaction UDP-4-deoxy-4-formamido-beta-L-arabinose + di-trans,octa-cis-undecaprenyl phosphate = 4-deoxy-4-formamido-alpha-L-arabinopyranosyl di-trans,octa-cis-undecaprenyl phosphate + UDP. The protein operates within glycolipid biosynthesis; 4-amino-4-deoxy-alpha-L-arabinose undecaprenyl phosphate biosynthesis; 4-amino-4-deoxy-alpha-L-arabinose undecaprenyl phosphate from UDP-4-deoxy-4-formamido-beta-L-arabinose and undecaprenyl phosphate: step 1/2. Its pathway is bacterial outer membrane biogenesis; lipopolysaccharide biosynthesis. In terms of biological role, catalyzes the transfer of 4-deoxy-4-formamido-L-arabinose from UDP to undecaprenyl phosphate. The modified arabinose is attached to lipid A and is required for resistance to polymyxin and cationic antimicrobial peptides. The protein is Undecaprenyl-phosphate 4-deoxy-4-formamido-L-arabinose transferase of Escherichia coli O139:H28 (strain E24377A / ETEC).